Reading from the N-terminus, the 122-residue chain is Large ribosomal subunit protein bL12 (122 aa).

This sequence belongs to the bacterial ribosomal protein bL12 family. In terms of assembly, homodimer. Part of the ribosomal stalk of the 50S ribosomal subunit. Forms a multimeric L10(L12)X complex, where L10 forms an elongated spine to which 2 to 4 L12 dimers bind in a sequential fashion. Binds GTP-bound translation factors.

Forms part of the ribosomal stalk which helps the ribosome interact with GTP-bound translation factors. Is thus essential for accurate translation. This chain is Large ribosomal subunit protein bL12, found in Xanthomonas oryzae pv. oryzae (strain MAFF 311018).